The primary structure comprises 527 residues: Tubulin-specific chaperone E (527 aa).

Ser2 is subject to N-acetylserine. Residues 27–71 (GVVPPVAGPWLGVEWDNPERGKHDGSHEGTVYFQCRHPTGGSFIR) form the CAP-Gly domain. LRR repeat units follow at residues 154–175 (NIRK…IHIA), 180–200 (HLEV…SVLT), 205–226 (ALKV…RCAM), 230–252 (GLEE…DVLQ), 253–274 (TVKL…YLIA), 278–299 (RLEQ…DAGI), and 308–329 (SLKY…NELD). One can recognise an LRRCT domain in the interval 342 to 384 (NPLTKEDKEAETARLLIIASIGQLKTLNKCEILPEERRRAELD). At Lys463 the chain carries N6-acetyllysine. The residue at position 495 (Ser495) is a Phosphoserine.

This sequence belongs to the TBCE family. As to quaternary structure, supercomplex made of cofactors A to E. Cofactors A and D function by capturing and stabilizing tubulin in a quasi-native conformation. Cofactor E binds to the cofactor D-tubulin complex; interaction with cofactor C then causes the release of tubulin polypeptides that are committed to the native state. Cofactors B and E can form a heterodimer which binds to alpha-tubulin and enhances their ability to dissociate tubulin heterodimers. Interacts with TBCD.

Its subcellular location is the cytoplasm. The protein localises to the cytoskeleton. Its function is as follows. Tubulin-folding protein; involved in the second step of the tubulin folding pathway and in the regulation of tubulin heterodimer dissociation. Required for correct organization of microtubule cytoskeleton and mitotic splindle, and maintenance of the neuronal microtubule network. This chain is Tubulin-specific chaperone E (TBCE), found in Pongo abelii (Sumatran orangutan).